Consider the following 440-residue polypeptide: Adenosylhomocysteinase (440 aa).

Substrate contacts are provided by Thr64, Asp139, and Glu164. 165–167 serves as a coordination point for NAD(+); sequence TTT. Substrate contacts are provided by Lys194 and Asp198. Residues Asn199, 228–233, Glu251, Asn286, 307–309, and Asn352 each bind NAD(+); these read GFGDVG and IGH.

This sequence belongs to the adenosylhomocysteinase family. NAD(+) is required as a cofactor.

It localises to the cytoplasm. It catalyses the reaction S-adenosyl-L-homocysteine + H2O = L-homocysteine + adenosine. The protein operates within amino-acid biosynthesis; L-homocysteine biosynthesis; L-homocysteine from S-adenosyl-L-homocysteine: step 1/1. May play a key role in the regulation of the intracellular concentration of adenosylhomocysteine. The sequence is that of Adenosylhomocysteinase from Granulibacter bethesdensis (strain ATCC BAA-1260 / CGDNIH1).